Consider the following 570-residue polypeptide: Sulfite reductase [NADPH] hemoprotein beta-component (570 aa).

The [4Fe-4S] cluster site is built by C434, C440, C479, and C483. Siroheme is bound at residue C483.

This sequence belongs to the nitrite and sulfite reductase 4Fe-4S domain family. In terms of assembly, alpha(8)-beta(8). The alpha component is a flavoprotein, the beta component is a hemoprotein. The cofactor is siroheme. [4Fe-4S] cluster serves as cofactor.

It catalyses the reaction hydrogen sulfide + 3 NADP(+) + 3 H2O = sulfite + 3 NADPH + 4 H(+). It participates in sulfur metabolism; hydrogen sulfide biosynthesis; hydrogen sulfide from sulfite (NADPH route): step 1/1. Component of the sulfite reductase complex that catalyzes the 6-electron reduction of sulfite to sulfide. This is one of several activities required for the biosynthesis of L-cysteine from sulfate. This chain is Sulfite reductase [NADPH] hemoprotein beta-component, found in Salmonella dublin (strain CT_02021853).